The primary structure comprises 646 residues: Hypoxia up-regulated protein 1 (646 aa).

An N-terminal signal peptide occupies residues 1–22 (MRPLVCVLWMFLFALLSSHTES). Residues 572 to 646 (LFGGGSSVSE…KEEEKAEPQE (75 aa)) form a disordered region. A compositionally biased stretch (acidic residues) spans 590-610 (VQEEDEVPTEPTKEEEQESAD). The segment covering 611 to 646 (PADKQQDKENNKEKGTSATNEKEEGKKEEEKAEPQE) has biased composition (basic and acidic residues).

Belongs to the heat shock protein 70 family.

It is found in the endoplasmic reticulum lumen. In terms of biological role, has a pivotal role in cytoprotective cellular mechanisms triggered by oxygen deprivation. May play a role as a molecular chaperone and participate in protein folding. The protein is Hypoxia up-regulated protein 1 (hyou1) of Xenopus laevis (African clawed frog).